The primary structure comprises 457 residues: Forkhead box protein N3 (457 aa).

Residues 1 to 24 are disordered; sequence MGPVMPASKKAESSGISVSSGLSQ. A compositionally biased stretch (low complexity) spans 13–23; the sequence is SSGISVSSGLS. A phosphoserine mark is found at serine 83, serine 85, and serine 97. Residues 86–109 are disordered; that stretch reads PVQDLDDDTPPSPAHSDMPYDARQ. Positions 114–210 form a DNA-binding region, fork-head; sequence KPPYSFSCLI…QALKKTPYHP (97 aa). The segment at 285–422 is disordered; it reads RTESEPPCGS…PESDDEEMKE (138 aa). Composition is skewed to low complexity over residues 308-331 and 342-353; these read SSAK…SSSS and GSQEGSEGSFQS. Residues 354–376 are compositionally biased toward basic and acidic residues; it reads HESHSEPEEEDRKPSPKEGKDAL. Positions 384–396 are enriched in basic residues; the sequence is QHKKRQHFAKARK. Serine 415 is subject to Phosphoserine.

In terms of assembly, interacts through its C-terminus with the C-terminus of SNW1/SKIP.

The protein resides in the nucleus. In terms of biological role, acts as a transcriptional repressor. May be involved in DNA damage-inducible cell cycle arrests (checkpoints). This chain is Forkhead box protein N3 (Foxn3), found in Mus musculus (Mouse).